Consider the following 166-residue polypeptide: MFPMVTEFMNYGQQTVRATRYIGQGFMITLSHANRLPVTVQYPYEKLITSERFRGRIHFEFDKCIACEVCVRVCPIDLPVVDWKLETDIRKKRLLNYSIDFGICIFCGNCVEYCPTNCLSMTEEYELSTYDRHELNYNQIALGRLPMSIIDDYTIRTILNLPEIKT.

2 4Fe-4S ferredoxin-type domains span residues 55 to 84 and 95 to 124; these read GRIH…VDWK and LNYS…MTEE. C64, C67, C70, C74, C104, C107, C110, and C114 together coordinate [4Fe-4S] cluster.

Belongs to the complex I 23 kDa subunit family. As to quaternary structure, NDH is composed of at least 16 different subunits, 5 of which are encoded in the nucleus. The cofactor is [4Fe-4S] cluster.

It is found in the plastid. Its subcellular location is the chloroplast thylakoid membrane. The catalysed reaction is a plastoquinone + NADH + (n+1) H(+)(in) = a plastoquinol + NAD(+) + n H(+)(out). It carries out the reaction a plastoquinone + NADPH + (n+1) H(+)(in) = a plastoquinol + NADP(+) + n H(+)(out). NDH shuttles electrons from NAD(P)H:plastoquinone, via FMN and iron-sulfur (Fe-S) centers, to quinones in the photosynthetic chain and possibly in a chloroplast respiratory chain. The immediate electron acceptor for the enzyme in this species is believed to be plastoquinone. Couples the redox reaction to proton translocation, and thus conserves the redox energy in a proton gradient. The sequence is that of NAD(P)H-quinone oxidoreductase subunit I, chloroplastic from Chaenactis santolinoides (Santolina pincushion).